Here is a 498-residue protein sequence, read N- to C-terminus: MASMLSKRLGKRSLLGARVCAPTLSGDGMLVDGQMSIQAEISGGFGAGALEGGYCKEFPEDGSCASAMSPTNRFKLYPGQKVYITHNGKEYVGLVEQHNHVDDEVKLFVLELGLHLCRKMEDVRLAETQKPLSSPIEQSLPTSPGATSTSAQRSVSRSIDVPKRRSDAVEMDEMMAAMVLTSLSCSPIVQSPPCTDSIPAPRVTCDLWKEGGDVSDSGSSTTSGHWSASSGVSTPSPPHTDASPKYTSEVFSASHVDEGFETDPDPFLLDEPAPRKRKNSVKIMYKCLWPNCGKLLRSIVGIKRHVKTQHLGDGLDSDQRKREEDFYYTEVQMKEDPEAEPTPKSPSSATAPLLIQPVPAKPETHAIEVPSVESPLSSALSQSAPGSFWHIQTDHAYQALSSIQIPVSPHIFTSISWAAASSTIPTLSPIRSRSLSFSEQQQQAIKSHLIVASPPRPSNGNRKIRGEAKKCRKVYGIEHRDQWCTACRWKKACQRFLD.

Residues 129–165 (QKPLSSPIEQSLPTSPGATSTSAQRSVSRSIDVPKRR) form a disordered region. Residues 130–157 (KPLSSPIEQSLPTSPGATSTSAQRSVSR) are compositionally biased toward polar residues. The short motif at 171–180 (MDEMMAAMVL) is the Nuclear export signal element. A disordered region spans residues 209–245 (KEGGDVSDSGSSTTSGHWSASSGVSTPSPPHTDASPK). The span at 214 to 231 (VSDSGSSTTSGHWSASSG) shows a compositional bias: low complexity. A C2H2-type zinc finger spans residues 285–310 (YKCLWPNCGKLLRSIVGIKRHVKTQH).

The protein localises to the cytoplasm. It localises to the nucleus. The polypeptide is Zinc finger protein 395 (znf395) (Xenopus laevis (African clawed frog)).